The chain runs to 277 residues: Digeranylgeranylglyceryl phosphate synthase (277 aa).

7 consecutive transmembrane segments (helical) span residues 16–36, 84–104, 107–127, 146–166, 200–220, 221–241, and 257–277; these read ILAG…IPDI, ALYY…FLNI, FVFA…LKPL, GAIG…AFLV, AIIA…PVKV, GIGL…KASI, and LKIA…TKGV.

Belongs to the UbiA prenyltransferase family. DGGGP synthase subfamily. The cofactor is Mg(2+).

The protein resides in the cell membrane. The enzyme catalyses sn-3-O-(geranylgeranyl)glycerol 1-phosphate + (2E,6E,10E)-geranylgeranyl diphosphate = 2,3-bis-O-(geranylgeranyl)-sn-glycerol 1-phosphate + diphosphate. It functions in the pathway membrane lipid metabolism; glycerophospholipid metabolism. In terms of biological role, prenyltransferase that catalyzes the transfer of the geranylgeranyl moiety of geranylgeranyl diphosphate (GGPP) to the C2 hydroxyl of (S)-3-O-geranylgeranylglyceryl phosphate (GGGP). This reaction is the second ether-bond-formation step in the biosynthesis of archaeal membrane lipids. The protein is Digeranylgeranylglyceryl phosphate synthase of Pyrococcus furiosus (strain ATCC 43587 / DSM 3638 / JCM 8422 / Vc1).